Here is a 500-residue protein sequence, read N- to C-terminus: Maturase K (500 aa).

This sequence belongs to the intron maturase 2 family. MatK subfamily.

Its subcellular location is the plastid. It is found in the chloroplast. Usually encoded in the trnK tRNA gene intron. Probably assists in splicing its own and other chloroplast group II introns. The chain is Maturase K from Argentina anserina (Silverweed cinquefoil).